A 408-amino-acid chain; its full sequence is Lupus La protein (408 aa).

The region spanning 7–99 is the HTH La-type RNA-binding domain; the sequence is NEKMAALEAK…RRSPSKPLPE (93 aa). Ser92 and Ser94 each carry phosphoserine. Residues 111–187 form the RRM domain; it reads RSVYIKGFPT…TDLLILFKDD (77 aa). Lys116 bears the N6-acetyllysine mark. A Phosphothreonine modification is found at Thr120. Position 128 is an N6-acetyllysine (Lys128). Ser225 is modified (phosphoserine). A xRRM domain is found at 227-348; sequence EEKIGCLLKF…KGKGNKAAQP (122 aa). 3 positions are modified to N6-acetyllysine: Lys328, Lys341, and Lys360. The segment covering 329 to 342 has biased composition (basic residues); that stretch reads WKSKGRRFKGKGKG. Positions 329–408 are disordered; the sequence is WKSKGRRFKG…QKTENGAGDQ (80 aa). Thr362 is modified (phosphothreonine). Phosphoserine; by CK2 is present on Ser366. Over residues 384 to 395 the composition is skewed to basic and acidic residues; that stretch reads RAREETDKEEPA.

As to quaternary structure, interacts with DDX15. May interact with RUFY1. In terms of processing, phosphorylated. The phosphorylation sites are at the C-terminal part of the protein. Post-translationally, the N-terminus is blocked.

It localises to the nucleus. In terms of biological role, binds to the 3' poly(U) terminus of nascent RNA polymerase III transcripts, protecting them from exonuclease digestion and facilitating their folding and maturation. In case of Coxsackievirus B3 infection, binds to the viral internal ribosome entry site (IRES) and stimulates the IRES-mediated translation. The protein is Lupus La protein (SSB) of Homo sapiens (Human).